Consider the following 212-residue polypeptide: ATP synthase subunit 5, mitochondrial (212 aa).

A mitochondrion-targeting transit peptide spans 1 to 17; that stretch reads MFNRVFTRSFASSLRAA.

It belongs to the ATPase delta chain family. F-type ATPases have 2 components, CF(1) - the catalytic core - and CF(0) - the membrane proton channel. CF(1) has five subunits: alpha(3), beta(3), gamma(1), delta(1), epsilon(1). CF(0) has three main subunits: a, b and c.

The protein localises to the mitochondrion. It is found in the mitochondrion inner membrane. Its function is as follows. Mitochondrial membrane ATP synthase (F(1)F(0) ATP synthase or Complex V) produces ATP from ADP in the presence of a proton gradient across the membrane which is generated by electron transport complexes of the respiratory chain. F-type ATPases consist of two structural domains, F(1) - containing the extramembraneous catalytic core and F(0) - containing the membrane proton channel, linked together by a central stalk and a peripheral stalk. During catalysis, ATP synthesis in the catalytic domain of F(1) is coupled via a rotary mechanism of the central stalk subunits to proton translocation. Part of the complex F(0) domain and the peripheric stalk, which acts as a stator to hold the catalytic alpha(3)beta(3) subcomplex and subunit a/ATP6 static relative to the rotary elements. This is ATP synthase subunit 5, mitochondrial (ATP5) from Saccharomyces cerevisiae (strain ATCC 204508 / S288c) (Baker's yeast).